A 340-amino-acid polypeptide reads, in one-letter code: Phosphoribosylformylglycinamidine cyclo-ligase (340 aa).

This sequence belongs to the AIR synthase family.

It is found in the cytoplasm. It carries out the reaction 2-formamido-N(1)-(5-O-phospho-beta-D-ribosyl)acetamidine + ATP = 5-amino-1-(5-phospho-beta-D-ribosyl)imidazole + ADP + phosphate + H(+). It functions in the pathway purine metabolism; IMP biosynthesis via de novo pathway; 5-amino-1-(5-phospho-D-ribosyl)imidazole from N(2)-formyl-N(1)-(5-phospho-D-ribosyl)glycinamide: step 2/2. The chain is Phosphoribosylformylglycinamidine cyclo-ligase from Streptococcus pneumoniae (strain P1031).